A 264-amino-acid chain; its full sequence is Thymidylate synthase (264 aa).

A dUMP-binding site is contributed by Arg21. Residue His51 participates in (6R)-5,10-methylene-5,6,7,8-tetrahydrofolate binding. 126 to 127 (RR) contacts dUMP. The Nucleophile role is filled by Cys146. DUMP is bound by residues 166 to 169 (RSAD), Asn177, and 207 to 209 (HLY). Asp169 serves as a coordination point for (6R)-5,10-methylene-5,6,7,8-tetrahydrofolate. Position 263 (Ser263) interacts with (6R)-5,10-methylene-5,6,7,8-tetrahydrofolate.

The protein belongs to the thymidylate synthase family. Bacterial-type ThyA subfamily. As to quaternary structure, homodimer.

The protein resides in the cytoplasm. It carries out the reaction dUMP + (6R)-5,10-methylene-5,6,7,8-tetrahydrofolate = 7,8-dihydrofolate + dTMP. The protein operates within pyrimidine metabolism; dTTP biosynthesis. Its function is as follows. Catalyzes the reductive methylation of 2'-deoxyuridine-5'-monophosphate (dUMP) to 2'-deoxythymidine-5'-monophosphate (dTMP) while utilizing 5,10-methylenetetrahydrofolate (mTHF) as the methyl donor and reductant in the reaction, yielding dihydrofolate (DHF) as a by-product. This enzymatic reaction provides an intracellular de novo source of dTMP, an essential precursor for DNA biosynthesis. The sequence is that of Thymidylate synthase from Neisseria meningitidis serogroup B (strain ATCC BAA-335 / MC58).